The primary structure comprises 251 residues: Haloacid dehalogenase-like hydrolase domain-containing protein 3 (251 aa).

The residue at position 15 (Lys-15) is an N6-acetyllysine; alternate. Lys-15 carries the post-translational modification N6-succinyllysine; alternate.

The protein belongs to the HAD-like hydrolase superfamily.

In Homo sapiens (Human), this protein is Haloacid dehalogenase-like hydrolase domain-containing protein 3 (HDHD3).